We begin with the raw amino-acid sequence, 425 residues long: Inositol hexakisphosphate kinase 2 (425 aa).

ATP is bound by residues 206 to 208 and Asp219; that span reads ENL. Substrate is bound by residues 215–223, Lys221, and 235–242; these read PCVLDLKMG and KAANQIRK. ATP is bound at residue Asp382. Residue His385 coordinates substrate.

This sequence belongs to the inositol phosphokinase (IPK) family. Highly expressed in small intestine.

The protein localises to the nucleus. It carries out the reaction 1D-myo-inositol hexakisphosphate + ATP = 5-diphospho-1D-myo-inositol 1,2,3,4,6-pentakisphosphate + ADP. Its pathway is phospholipid metabolism; phosphatidylinositol metabolism. Functionally, converts inositol hexakisphosphate (InsP6) to diphosphoinositol pentakisphosphate (InsP7/PP-InsP5). The polypeptide is Inositol hexakisphosphate kinase 2 (Ip6k2) (Rattus norvegicus (Rat)).